The primary structure comprises 755 residues: Transcription factor kayak, isoforms A/B/F (755 aa).

2 stretches are compositionally biased toward low complexity: residues 23–66 and 149–159; these read FAQQ…LPTQ and QQHYPSESQSS. Disordered regions lie at residues 23–75, 149–168, 316–350, and 383–440; these read FAQQ…SQSV, QQHYPSESQSSASGWNPETP, LGQGSESEDSNASYNDTQMNEEQDTTDTSSAHTDS, and GSAS…KRRV. Residues 316-333 show a composition bias toward polar residues; it reads LGQGSESEDSNASYNDTQ. Low complexity-rich tracts occupy residues 341-350 and 383-397; these read TDTSSAHTDS and GSASVGSSNANTSNT. The bZIP domain occupies 418–481; it reads EQKRAVRRER…NQLEYLLATH (64 aa). The segment at 420–439 is basic motif; the sequence is KRAVRRERNKQAAARCRKRR. The interval 446–453 is leucine-zipper; that stretch reads LTEEVEQL. Over residues 510–531 the composition is skewed to low complexity; that stretch reads AGSSGSGASSHHNHNSNDSSNG. 2 disordered regions span residues 510–552 and 716–755; these read AGSS…PLDL and DGGTGLTPVSGPLVPNSSSTNKHPLELPTPTAEPSKLVSL. The span at 539 to 549 shows a compositional bias: polar residues; sequence TLNSTGRSNSP. Phosphoserine is present on Ser-548.

This sequence belongs to the bZIP family. Fos subfamily. As to quaternary structure, homodimer. Heterodimer with Jra. The kay-Jra heterodimer binds more stably to the AP-1 site than either of the two proteins alone. In terms of tissue distribution, early expression in the embryo is mesodermal and some of this expression is localized to a region surrounding the cephalic furrow. Later in embryonic development expression is ectodermal, corresponding to muscle attachment sites. Also observed in part of the mid- and hindgut and in the anal pad.

The protein resides in the nucleus. Functionally, developmentally regulated transcription factor AP-1 binds and recognizes the enhancer DNA sequence: 5'-TGA[CG]TCA-3'. May play a role in the function or determination of a particular subset of cells in the developing embryo. It is able to carry out its function either independently of or in conjunction with Jra. This Drosophila melanogaster (Fruit fly) protein is Transcription factor kayak, isoforms A/B/F (kay).